The sequence spans 288 residues: ATP synthase gamma chain (288 aa).

It belongs to the ATPase gamma chain family. F-type ATPases have 2 components, CF(1) - the catalytic core - and CF(0) - the membrane proton channel. CF(1) has five subunits: alpha(3), beta(3), gamma(1), delta(1), epsilon(1). CF(0) has three main subunits: a, b and c.

It is found in the cell inner membrane. Functionally, produces ATP from ADP in the presence of a proton gradient across the membrane. The gamma chain is believed to be important in regulating ATPase activity and the flow of protons through the CF(0) complex. This Rickettsia canadensis (strain McKiel) protein is ATP synthase gamma chain.